We begin with the raw amino-acid sequence, 253 residues long: Small ribosomal subunit protein uS3 (253 aa).

One can recognise a KH type-2 domain in the interval 39–109; sequence IRNYVLARLK…EVKIDVVEVI (71 aa). The disordered stretch occupies residues 220 to 253; sequence DEMKKMKDRRNDGGAKGRDSRDNRSKRRSRSKRS. Over residues 221–242 the composition is skewed to basic and acidic residues; that stretch reads EMKKMKDRRNDGGAKGRDSRDN. Positions 243–253 are enriched in basic residues; the sequence is RSKRRSRSKRS.

Belongs to the universal ribosomal protein uS3 family. As to quaternary structure, part of the 30S ribosomal subunit. Forms a tight complex with proteins S10 and S14.

Functionally, binds the lower part of the 30S subunit head. Binds mRNA in the 70S ribosome, positioning it for translation. The polypeptide is Small ribosomal subunit protein uS3 (Chlorobium chlorochromatii (strain CaD3)).